Here is a 557-residue protein sequence, read N- to C-terminus: Formate--tetrahydrofolate ligase (557 aa).

66 to 73 (TPAGEGKS) is a binding site for ATP.

Belongs to the formate--tetrahydrofolate ligase family.

The catalysed reaction is (6S)-5,6,7,8-tetrahydrofolate + formate + ATP = (6R)-10-formyltetrahydrofolate + ADP + phosphate. The protein operates within one-carbon metabolism; tetrahydrofolate interconversion. This is Formate--tetrahydrofolate ligase from Clostridium botulinum (strain 657 / Type Ba4).